Consider the following 287-residue polypeptide: Iron-sulfur cluster carrier protein (287 aa).

47-54 (GKGGVGKS) provides a ligand contact to ATP.

It belongs to the Mrp/NBP35 ATP-binding proteins family. In terms of assembly, homodimer.

Its function is as follows. Binds and transfers iron-sulfur (Fe-S) clusters to target apoproteins. Can hydrolyze ATP. The protein is Iron-sulfur cluster carrier protein of Pseudomonas fragi.